The following is a 255-amino-acid chain: 5'-nucleotidase SurE (255 aa).

Positions 8, 9, 40, and 93 each coordinate a divalent metal cation.

Belongs to the SurE nucleotidase family. It depends on a divalent metal cation as a cofactor.

The protein resides in the cytoplasm. The catalysed reaction is a ribonucleoside 5'-phosphate + H2O = a ribonucleoside + phosphate. Its function is as follows. Nucleotidase that shows phosphatase activity on nucleoside 5'-monophosphates. The sequence is that of 5'-nucleotidase SurE from Rhodopseudomonas palustris (strain ATCC BAA-98 / CGA009).